The primary structure comprises 202 residues: MATLIYVDKENEEPGTLVATTDGLKLGSGPSIKALDGRSQVSISCFGKTFDAPTSLPKATRKALGTVNRATEKSVKTNGPLKQKQPSFSAKKMTEKTVKAKNSVPASDDAYPEIEKLFPFNPLGFESFDLPEEHQIAHLPLSGVPLMILDEERELEKLFQLGPPSPLKMPSPPWKSNLLQSPLSILLTLDVELPPVCSDIDI.

A D-box motif is present at residues 61 to 64 (RKAL). An SH3-binding motif is present at residues 163 to 173 (PPSPLKMPSPP).

It belongs to the securin family.

It localises to the cytoplasm. It is found in the nucleus. The sequence is that of Putative pituitary tumor-transforming gene 3 protein (PTTG3) from Pan troglodytes (Chimpanzee).